The following is a 63-amino-acid chain: Large ribosomal subunit protein bL32 (63 aa).

The segment at 1-23 (MATPKAKVSKSRRDKRRAQFTAR) is disordered. Basic residues predominate over residues 7–18 (KVSKSRRDKRRA).

This sequence belongs to the bacterial ribosomal protein bL32 family.

The sequence is that of Large ribosomal subunit protein bL32 from Prosthecochloris aestuarii (strain DSM 271 / SK 413).